Here is a 308-residue protein sequence, read N- to C-terminus: Olfactory receptor 2D2 (308 aa).

Residues 1–25 (MRQINQTQVTEFLLLGLSDGPHTEQ) are Extracellular-facing. A glycan (N-linked (GlcNAc...) asparagine) is linked at Asn5. A helical membrane pass occupies residues 26-49 (LLFIVLLGVYLVTVLGNLLLISLV). Residues 50-57 (HVDSQLHT) lie on the Cytoplasmic side of the membrane. The helical transmembrane segment at 58 to 79 (PMYFFLCNLSLADLCFSTNIVP) threads the bilayer. Topologically, residues 80–100 (QALVHLLSRKKVIAFTLCAAR) are extracellular. Residues 101–120 (LLFFLIFGCTQCALLAVMSY) form a helical membrane-spanning segment. At 121 to 139 (DRYVAICNPLRYPNIMTWK) the chain is on the cytoplasmic side. A helical transmembrane segment spans residues 140–158 (VCVQLATGSWTSGILVSVV). Residues 159 to 195 (DTTFILRLPYRGSNSIAHFFCEAPALLILASTDTHAS) are Extracellular-facing. The chain crosses the membrane as a helical span at residues 196–219 (EMAIFLMGVVILLIPVFLILVSYG). Residues 220-236 (RIIVTVVKMKSTVGSLK) lie on the Cytoplasmic side of the membrane. Residues 237–259 (AFSTCGSHLMVVILFYGSAIITY) form a helical membrane-spanning segment. Over 260-270 (MTPKSSKQQEK) the chain is Extracellular. The helical transmembrane segment at 271 to 290 (SVSVFYAIVTPMLNPLIYSL) threads the bilayer. The Cytoplasmic segment spans residues 291 to 308 (RNKDVKAALRKVATRNFP).

It belongs to the G-protein coupled receptor 1 family.

It is found in the cell membrane. Functionally, odorant receptor. The polypeptide is Olfactory receptor 2D2 (OR2D2) (Homo sapiens (Human)).